Reading from the N-terminus, the 112-residue chain is T cell receptor alpha variable 30 (112 aa).

An N-terminal signal peptide occupies residues 1–21 (METLLKVLSGTLLWQLTWVRS). The region spanning 24–112 (PVQSPQAVIL…YSGTYFCGTE (89 aa)) is the Ig-like domain. An N-linked (GlcNAc...) asparagine glycan is attached at N42. The cysteines at positions 43 and 109 are disulfide-linked.

In terms of assembly, alpha-beta TR is a heterodimer composed of an alpha and beta chain; disulfide-linked. The alpha-beta TR is associated with the transmembrane signaling CD3 coreceptor proteins to form the TR-CD3 (TcR or TCR). The assembly of alpha-beta TR heterodimers with CD3 occurs in the endoplasmic reticulum where a single alpha-beta TR heterodimer associates with one CD3D-CD3E heterodimer, one CD3G-CD3E heterodimer and one CD247 homodimer forming a stable octameric structure. CD3D-CD3E and CD3G-CD3E heterodimers preferentially associate with TR alpha and TR beta chains, respectively. The association of the CD247 homodimer is the last step of TcR assembly in the endoplasmic reticulum and is required for transport to the cell surface.

It is found in the cell membrane. V region of the variable domain of T cell receptor (TR) alpha chain that participates in the antigen recognition. Alpha-beta T cell receptors are antigen specific receptors which are essential to the immune response and are present on the cell surface of T lymphocytes. Recognize peptide-major histocompatibility (MH) (pMH) complexes that are displayed by antigen presenting cells (APC), a prerequisite for efficient T cell adaptive immunity against pathogens. Binding of alpha-beta TR to pMH complex initiates TR-CD3 clustering on the cell surface and intracellular activation of LCK that phosphorylates the ITAM motifs of CD3G, CD3D, CD3E and CD247 enabling the recruitment of ZAP70. In turn ZAP70 phosphorylates LAT, which recruits numerous signaling molecules to form the LAT signalosome. The LAT signalosome propagates signal branching to three major signaling pathways, the calcium, the mitogen-activated protein kinase (MAPK) kinase and the nuclear factor NF-kappa-B (NF-kB) pathways, leading to the mobilization of transcription factors that are critical for gene expression and essential for T cell growth and differentiation. The T cell repertoire is generated in the thymus, by V-(D)-J rearrangement. This repertoire is then shaped by intrathymic selection events to generate a peripheral T cell pool of self-MH restricted, non-autoaggressive T cells. Post-thymic interaction of alpha-beta TR with the pMH complexes shapes TR structural and functional avidity. The sequence is that of T cell receptor alpha variable 30 from Homo sapiens (Human).